Here is a 314-residue protein sequence, read N- to C-terminus: Olfactory receptor 5P81 (314 aa).

The Extracellular segment spans residues 1–28 (MAFLEDGNHTVVTEFILLGLTDDPVLRV). An N-linked (GlcNAc...) asparagine glycan is attached at N8. A helical membrane pass occupies residues 29–49 (ILFIIILCIYLVTVSGNLSTI). Residues 50-57 (LLIRVSSQ) lie on the Cytoplasmic side of the membrane. The chain crosses the membrane as a helical span at residues 58 to 78 (LHHPMYFFLSHLASIDIAISS). At 79 to 102 (SVTPNMVVNFLVERSSISYIGCGI) the chain is on the extracellular side. An intrachain disulfide couples C100 to C192. A helical transmembrane segment spans residues 103 to 123 (QLGSAVFFGAIECFLLAVMAY). Residues 124–136 (DRFVAICNPLLYS) are Cytoplasmic-facing. A helical transmembrane segment spans residues 137-157 (TKMSKQVCIQLLVGSYIGGFI). Over 158–199 (HASFFTLSFVSFLFCGPNRINHFFCDFTPLVELSCSDNSVLI) the chain is Extracellular. The chain crosses the membrane as a helical span at residues 200–220 (ILDSFSTGTIIVITVFVIAIS). At 221–240 (YTCILITILKMHSTEGRHKA) the chain is on the cytoplasmic side. Residues 241-261 (FSTCTSHLTVVTLLYGTVTFI) traverse the membrane as a helical segment. The Extracellular portion of the chain corresponds to 262–274 (YVMPKSSYSTDQN). Residues 275–295 (KVISVFYMVVIPMLNPIIYSL) form a helical membrane-spanning segment. The Cytoplasmic segment spans residues 296 to 314 (RNNEIKGALKKQLGEKNIF).

The protein belongs to the G-protein coupled receptor 1 family.

It is found in the cell membrane. Its function is as follows. Potential odorant receptor. This Mus musculus (Mouse) protein is Olfactory receptor 5P81.